A 274-amino-acid polypeptide reads, in one-letter code: 2,3,4,5-tetrahydropyridine-2,6-dicarboxylate N-succinyltransferase (274 aa).

Positions 104 and 141 each coordinate substrate.

It belongs to the transferase hexapeptide repeat family. As to quaternary structure, homotrimer.

It is found in the cytoplasm. It catalyses the reaction (S)-2,3,4,5-tetrahydrodipicolinate + succinyl-CoA + H2O = (S)-2-succinylamino-6-oxoheptanedioate + CoA. Its pathway is amino-acid biosynthesis; L-lysine biosynthesis via DAP pathway; LL-2,6-diaminopimelate from (S)-tetrahydrodipicolinate (succinylase route): step 1/3. The sequence is that of 2,3,4,5-tetrahydropyridine-2,6-dicarboxylate N-succinyltransferase from Yersinia enterocolitica serotype O:8 / biotype 1B (strain NCTC 13174 / 8081).